We begin with the raw amino-acid sequence, 1374 residues long: DNA-directed RNA polymerase subunit beta (1374 aa).

Belongs to the RNA polymerase beta chain family. The RNAP catalytic core consists of 2 alpha, 1 beta, 1 beta' and 1 omega subunit. When a sigma factor is associated with the core the holoenzyme is formed, which can initiate transcription.

The enzyme catalyses RNA(n) + a ribonucleoside 5'-triphosphate = RNA(n+1) + diphosphate. DNA-dependent RNA polymerase catalyzes the transcription of DNA into RNA using the four ribonucleoside triphosphates as substrates. This Acidovorax sp. (strain JS42) protein is DNA-directed RNA polymerase subunit beta.